The primary structure comprises 399 residues: Salivary protein Tsal1 (399 aa).

Residues 1–22 form the signal peptide; it reads MALKLVYGVFTLALLGISSVNA. N-linked (GlcNAc...) asparagine glycosylation is present at N268.

Belongs to the DNA/RNA non-specific endonuclease family. A divalent metal cation is required as a cofactor. In terms of tissue distribution, saliva (at protein level).

It localises to the secreted. Functionally, binds double-stranded DNA (dsDNA) with high affinity. Binds double-stranded RNA. Binds single-stranded DNA with lower affinity and with a preference for purine-rich sequences. Shows residual nuclease activity for dsDNA. May facilitate blood meal intake by lowering the local viscosity created by the release of host DNA. The protein is Salivary protein Tsal1 of Glossina morsitans morsitans (Savannah tsetse fly).